The sequence spans 856 residues: Centrosomal protein of 97 kDa (856 aa).

8 LRR repeats span residues 37–58 (DVHT…EKCK), 59–80 (QLIQ…AKLT), 81–102 (QLRV…KDLV), 103–124 (HLEW…NSCT), 125–146 (ALQH…SKLI), 147–168 (SLKT…PAYL), 171–192 (NLSI…SFLA), and 196–205 (ELEQLSIMNN). An LRRCT domain is found at 211–249 (TPSIPGFDYRPFIVSWCLNLRVLDGYVISQKESLKAEWL). Positions 300 to 742 (HQRQLMSQSQ…KCVKDRDSEA (443 aa)) are CCP110-binding. Residues S308 and S410 each carry the phosphoserine modification. Residues 430-451 (DDGADEFTKGLENQDEDKDKEK) form a disordered region. Phosphoserine is present on S497. Over residues 498 to 513 (LTSLPESAGHSASRTE) the composition is skewed to polar residues. A disordered region spans residues 498 to 525 (LTSLPESAGHSASRTEANSEEAMSPATS). At S521 the chain carries Phosphoserine. A Phosphothreonine modification is found at T534. The IQ domain maps to 550 to 579 (LNAAATKLQACWRGFYTRNYNQQAKGVRYE). Residues 579-853 (EIRLRRMQEH…FQGLHVGVTV (275 aa)) are interaction with MPHOSPH9. Disordered regions lie at residues 646-672 (PPIS…DQSS) and 737-840 (DRDS…PPEC). Residues 737–752 (DRDSEATAEEHSDCSR) are compositionally biased toward basic and acidic residues. Residues 753–773 (ESSASEQDNTLLQQYLTSVQQ) show a composition bias toward polar residues. Residue S755 is modified to Phosphoserine. Acidic residues predominate over residues 776–787 (DAAEAADSDDVA). Over residues 799-811 (ERFDASSDSETHR) the composition is skewed to basic and acidic residues. Positions 812–833 (VASTSQDEISQTPENCQLNEEA) are enriched in polar residues.

Interacts with CALM1, CEP76, KIF24 and TALPID3. Interacts with CCP110. ENKD1 competes with CEP97 for binding to CCP110, destabilizing the interaction between CP110 and CEP97 which promotes the removal of CCP110 and CEP97 from the mother centriole and allows the initiation of ciliogenesis. Via its interaction with CCP110, may indirectly interact with HERC2 and NEURL4. Interacts with MPHOSPH9.

The protein localises to the cytoplasm. Its subcellular location is the cytoskeleton. The protein resides in the microtubule organizing center. It localises to the centrosome. It is found in the centriole. Its function is as follows. Acts as a key negative regulator of ciliogenesis in collaboration with CCP110 by capping the mother centriole thereby preventing cilia formation. Required for recruitment of CCP110 to the centrosome. The sequence is that of Centrosomal protein of 97 kDa (Cep97) from Mus musculus (Mouse).